The following is a 266-amino-acid chain: HLA class II histocompatibility antigen, DR beta 5 chain (266 aa).

A signal peptide spans 1–29; it reads MVCLKLPGGSYMAKLTVTLMVLSSPLALA. A beta-1 region spans residues 30–124; it reads GDTRPRFLQQ…GESFTVQRRV (95 aa). Residues 30–227 are Extracellular-facing; sequence GDTRPRFLQQ…RAQSESAQSK (198 aa). 2 disulfide bridges follow: C44/C108 and C146/C202. N48 carries an N-linked (GlcNAc...) asparagine glycan. Residues 125-227 are beta-2; that stretch reads EPKVTVYPAR…RAQSESAQSK (103 aa). The region spanning 126–214 is the Ig-like C1-type domain; that stretch reads PKVTVYPART…EHPSVTSPLT (89 aa). A helical membrane pass occupies residues 228 to 248; that stretch reads MLSGVGGFVLGLLFLGAGLFI. The Cytoplasmic portion of the chain corresponds to 249 to 266; that stretch reads YFKNQKGHSGLHPTGLVS.

Belongs to the MHC class II family. Heterodimer of an alpha and a beta subunit; also referred as MHC class II molecule. In the endoplasmic reticulum (ER) it forms a heterononamer; 3 MHC class II molecules bind to a CD74 homotrimer (also known as invariant chain or HLA class II histocompatibility antigen gamma chain). In the endosomal/lysosomal system; CD74 undergoes sequential degradation by various proteases; leaving a small fragment termed CLIP on each MHC class II molecule. MHC class II molecule interacts with HLA_DM, and HLA_DO in B-cells, in order to release CLIP and facilitate the binding of antigenic peptides. Ubiquitinated by MARCH1 and MARCH8 at Lys-254 leading to down-regulation of MHC class II.

It localises to the cell membrane. Its subcellular location is the endoplasmic reticulum membrane. The protein localises to the golgi apparatus. It is found in the trans-Golgi network membrane. The protein resides in the endosome membrane. It localises to the lysosome membrane. Its subcellular location is the late endosome membrane. Its function is as follows. Binds peptides derived from antigens that access the endocytic route of antigen presenting cells (APC) and presents them on the cell surface for recognition by the CD4 T-cells. The peptide binding cleft accommodates peptides of 10-30 residues. The peptides presented by MHC class II molecules are generated mostly by degradation of proteins that access the endocytic route, where they are processed by lysosomal proteases and other hydrolases. Exogenous antigens that have been endocytosed by the APC are thus readily available for presentation via MHC II molecules, and for this reason this antigen presentation pathway is usually referred to as exogenous. As membrane proteins on their way to degradation in lysosomes as part of their normal turn-over are also contained in the endosomal/lysosomal compartments, exogenous antigens must compete with those derived from endogenous components. Autophagy is also a source of endogenous peptides, autophagosomes constitutively fuse with MHC class II loading compartments. In addition to APCs, other cells of the gastrointestinal tract, such as epithelial cells, express MHC class II molecules and CD74 and act as APCs, which is an unusual trait of the GI tract. To produce a MHC class II molecule that presents an antigen, three MHC class II molecules (heterodimers of an alpha and a beta chain) associate with a CD74 trimer in the ER to form a heterononamer. Soon after the entry of this complex into the endosomal/lysosomal system where antigen processing occurs, CD74 undergoes a sequential degradation by various proteases, including CTSS and CTSL, leaving a small fragment termed CLIP (class-II-associated invariant chain peptide). The removal of CLIP is facilitated by HLA-DM via direct binding to the alpha-beta-CLIP complex so that CLIP is released. HLA-DM stabilizes MHC class II molecules until primary high affinity antigenic peptides are bound. The MHC II molecule bound to a peptide is then transported to the cell membrane surface. In B-cells, the interaction between HLA-DM and MHC class II molecules is regulated by HLA-DO. Primary dendritic cells (DCs) also to express HLA-DO. Lysosomal microenvironment has been implicated in the regulation of antigen loading into MHC II molecules, increased acidification produces increased proteolysis and efficient peptide loading. The chain is HLA class II histocompatibility antigen, DR beta 5 chain from Homo sapiens (Human).